Here is an 863-residue protein sequence, read N- to C-terminus: Protein translocase subunit SecA (863 aa).

ATP is bound by residues Q88, 106 to 110, and D496; that span reads GEGKT. The disordered stretch occupies residues 818 to 842; the sequence is EVKTEPVITKKKPARNEPCPCGSGK. C836, C838, C847, and C848 together coordinate Zn(2+).

Belongs to the SecA family. Monomer and homodimer. Part of the essential Sec protein translocation apparatus which comprises SecA, SecYEG and auxiliary proteins SecDF-YajC and YidC. Zn(2+) serves as cofactor.

It is found in the cell inner membrane. The protein resides in the cytoplasm. It catalyses the reaction ATP + H2O + cellular proteinSide 1 = ADP + phosphate + cellular proteinSide 2.. Its function is as follows. Part of the Sec protein translocase complex. Interacts with the SecYEG preprotein conducting channel. Has a central role in coupling the hydrolysis of ATP to the transfer of proteins into and across the cell membrane, serving as an ATP-driven molecular motor driving the stepwise translocation of polypeptide chains across the membrane. This is Protein translocase subunit SecA from Nitratiruptor sp. (strain SB155-2).